We begin with the raw amino-acid sequence, 305 residues long: tRNA uridine(34) hydroxylase (305 aa).

The 95-residue stretch at 126 to 220 (SDPEVIVIDT…YLEQIPPEES (95 aa)) folds into the Rhodanese domain. Cys-180 serves as the catalytic Cysteine persulfide intermediate.

Belongs to the TrhO family.

The enzyme catalyses uridine(34) in tRNA + AH2 + O2 = 5-hydroxyuridine(34) in tRNA + A + H2O. Functionally, catalyzes oxygen-dependent 5-hydroxyuridine (ho5U) modification at position 34 in tRNAs. In Trichormus variabilis (strain ATCC 29413 / PCC 7937) (Anabaena variabilis), this protein is tRNA uridine(34) hydroxylase.